A 677-amino-acid polypeptide reads, in one-letter code: Methionine--tRNA ligase (677 aa).

Residues 15–25 (PYANGSIHLGH) carry the 'HIGH' region motif. Zn(2+) is bound by residues Cys-146, Cys-149, Cys-159, and Cys-162. A 'KMSKS' region motif is present at residues 333–337 (KMSKS). ATP is bound at residue Lys-336. The region spanning 576–677 (DFAKIDLRVA…EGAKPGMRVK (102 aa)) is the tRNA-binding domain.

Belongs to the class-I aminoacyl-tRNA synthetase family. MetG type 1 subfamily. As to quaternary structure, homodimer. It depends on Zn(2+) as a cofactor.

It is found in the cytoplasm. It carries out the reaction tRNA(Met) + L-methionine + ATP = L-methionyl-tRNA(Met) + AMP + diphosphate. Is required not only for elongation of protein synthesis but also for the initiation of all mRNA translation through initiator tRNA(fMet) aminoacylation. This is Methionine--tRNA ligase from Aeromonas hydrophila subsp. hydrophila (strain ATCC 7966 / DSM 30187 / BCRC 13018 / CCUG 14551 / JCM 1027 / KCTC 2358 / NCIMB 9240 / NCTC 8049).